Reading from the N-terminus, the 701-residue chain is Acetyl-coenzyme A synthetase, cytoplasmic (701 aa).

The disordered stretch occupies residues 1–41; that stretch reads MGLPEERVRSGSGSRGQEEAGAGGRARSWSPPPEVSRSAHV. The segment at 1 to 107 is interaction with TFEB; it reads MGLPEERVRS…GATTNICYNV (107 aa). Phosphoserine is present on residues Ser28, Ser30, and Ser36. 219–222 provides a ligand contact to CoA; the sequence is RGEK. Residues Ser263, Ser265, and Ser267 each carry the phosphoserine modification. Residue Thr363 participates in CoA binding. At Lys418 the chain carries N6-acetyllysine. Residues 439–441, 463–468, Asp552, and Arg567 contribute to the ATP site; these read GEP and DTFWQT. Ser575 and Arg636 together coordinate CoA. A Nuclear localization signal motif is present at residues 656-668; it reads KTRSGKIMRRVLR. Ser659 carries the post-translational modification Phosphoserine; by AMPK. Position 661 is an N6-acetyllysine (Lys661).

The protein belongs to the ATP-dependent AMP-binding enzyme family. As to quaternary structure, monomer. Interacts with TFEB. AMPK-mediated phosphorylated form at Ser-659 interacts with KPNA1; this interaction results in nuclear translocation of ACSS2. Interacts with the 'Thr-172' phosphorylated form of PRKAA2. Interacts with CREBBP. Post-translationally, reversibly acetylated at Lys-661. The acetyl-CoA synthase activity is inhibited by acetylation and activated by deacetylation mediated by the deacetylases SIRT1 and SIRT3. Glucose deprivation results in its AMPK-dependent phosphorylation at Ser-659, which leads to exposure of its nuclear localization signal, required for its interaction with KPNA1 and subsequent translocation to the nucleus.

The protein resides in the cytoplasm. The protein localises to the cytosol. It localises to the nucleus. The enzyme catalyses acetate + ATP + CoA = acetyl-CoA + AMP + diphosphate. It catalyses the reaction propanoate + ATP + CoA = propanoyl-CoA + AMP + diphosphate. Its activity is regulated as follows. Inhibited by acetylation at Lys-661 and activated by deacetylation mediated by the deacetylases SIRT1 and SIRT3. In terms of biological role, catalyzes the synthesis of acetyl-CoA from short-chain fatty acids. Acetate is the preferred substrate. Can also utilize propionate with a much lower affinity. Nuclear ACSS2 promotes glucose deprivation-induced lysosomal biogenesis and autophagy, tumor cell survival and brain tumorigenesis. Glucose deprivation results in AMPK-mediated phosphorylation of ACSS2 leading to its translocation to the nucleus where it binds to TFEB and locally produces acetyl-CoA for histone acetylation in the promoter regions of TFEB target genes thereby activating their transcription. The regulation of genes associated with autophagy and lysosomal activity through ACSS2 is important for brain tumorigenesis and tumor survival. Acts as a chromatin-bound transcriptional coactivator that up-regulates histone acetylation and expression of neuronal genes. Can be recruited to the loci of memory-related neuronal genes to maintain a local acetyl-CoA pool, providing the substrate for histone acetylation and promoting the expression of specific genes, which is essential for maintaining long-term spatial memory. This chain is Acetyl-coenzyme A synthetase, cytoplasmic (ACSS2), found in Homo sapiens (Human).